Reading from the N-terminus, the 256-residue chain is tRNA-cytidine(32) 2-sulfurtransferase (256 aa).

The short motif at serine 35 to serine 40 is the PP-loop motif element. [4Fe-4S] cluster-binding residues include cysteine 110, cysteine 113, and cysteine 201.

This sequence belongs to the TtcA family. As to quaternary structure, homodimer. The cofactor is Mg(2+). Requires [4Fe-4S] cluster as cofactor.

Its subcellular location is the cytoplasm. It carries out the reaction cytidine(32) in tRNA + S-sulfanyl-L-cysteinyl-[cysteine desulfurase] + AH2 + ATP = 2-thiocytidine(32) in tRNA + L-cysteinyl-[cysteine desulfurase] + A + AMP + diphosphate + H(+). It participates in tRNA modification. Its function is as follows. Catalyzes the ATP-dependent 2-thiolation of cytidine in position 32 of tRNA, to form 2-thiocytidine (s(2)C32). The sulfur atoms are provided by the cysteine/cysteine desulfurase (IscS) system. The polypeptide is tRNA-cytidine(32) 2-sulfurtransferase (Coxiella burnetii (strain Dugway 5J108-111)).